The following is a 164-amino-acid chain: Glycine cleavage system H protein, mitochondrial (164 aa).

The transit peptide at 1 to 39 (MAWLVLRRLGPVLAPRCPRLSLRPQVPAVRRLGTGSLLL) directs the protein to the mitochondrion. In terms of domain architecture, Lipoyl-binding spans 57–139 (IGTVGISNFA…YQDGWLIKMT (83 aa)). An N6-lipoyllysine modification is found at Lys98.

It belongs to the GcvH family. In terms of assembly, the glycine cleavage system is composed of four proteins: P (GLDC), T (GCST), L (DLD) and H (GCSH). Interacts with GLDC. It depends on (R)-lipoate as a cofactor.

The protein resides in the mitochondrion. Functionally, the glycine cleavage system catalyzes the degradation of glycine. The H protein (GCSH) shuttles the methylamine group of glycine from the P protein (GLDC) to the T protein (GCST). Has a pivotal role in the lipoylation of enzymes involved in cellular energetics such as the mitochondrial dihydrolipoyllysine-residue acetyltransferase component of pyruvate dehydrogenase complex (DLAT), and the mitochondrial dihydrolipoyllysine-residue succinyltransferase component of 2-oxoglutarate dehydrogenase complex (DLST). This Gallus gallus (Chicken) protein is Glycine cleavage system H protein, mitochondrial.